Here is a 363-residue protein sequence, read N- to C-terminus: 1,2-Dihydrovomilenine reductase (363 aa).

One can recognise an Enoyl reductase (ER) domain in the interval 24–352 (GILSPFKFSR…KGDVRYRFVI (329 aa)). A Zn(2+)-binding site is contributed by Cys51. Residue Ser53 participates in NADP(+) binding. Zn(2+) contacts are provided by Asp54, Glu74, Cys104, Cys107, Cys110, and Cys118. NADP(+) is bound by residues Leu193, Gly195, Leu196, Ser215, Thr216, Ser217, Lys220, Lys221, Val278, Ala280, Thr302, and Arg349.

This sequence belongs to the zinc-containing alcohol dehydrogenase family. Class-P subfamily. In terms of assembly, homodimer. Requires Zn(2+) as cofactor. Mainly expressed in mature roots and, to a lower extent, in stems and leaves.

It is found in the cytoplasm. The enzyme catalyses 17-O-acetylnorajmaline + NADP(+) = (2R)-1,2-dihydrovomilenine + NADPH + 2 H(+). It carries out the reaction (20S)-19,20-dihydrovomilenine + NADP(+) = vomilenine + NADPH + H(+). The protein operates within alkaloid biosynthesis; ajmaline biosynthesis. Functionally, alcohol dehydrogenase involved in the biosynthesis of ajmaline-type monoterpenoid indole alkaloids (MIAs) natural products, important plant-derived pharmaceuticals used in the therapy of heart disorders. Catalyzes the conversion of 1,2-dihydrovomilenine to 17-O-acetylnorajmaline, an intermediate chemical in the biosynthesis of ajmaline. Also able, with a lower efficiency, to convert vomilenine into 19,20-dihydrovomilenine. In Rauvolfia serpentina (Serpentine wood), this protein is 1,2-Dihydrovomilenine reductase.